Consider the following 491-residue polypeptide: UDP-N-acetylmuramate--L-alanine ligase (491 aa).

126–132 (GTHGKTT) contacts ATP.

The protein belongs to the MurCDEF family.

It localises to the cytoplasm. The enzyme catalyses UDP-N-acetyl-alpha-D-muramate + L-alanine + ATP = UDP-N-acetyl-alpha-D-muramoyl-L-alanine + ADP + phosphate + H(+). It participates in cell wall biogenesis; peptidoglycan biosynthesis. In terms of biological role, cell wall formation. The sequence is that of UDP-N-acetylmuramate--L-alanine ligase from Salmonella typhimurium (strain LT2 / SGSC1412 / ATCC 700720).